A 159-amino-acid polypeptide reads, in one-letter code: Phosphopantetheine adenylyltransferase (159 aa).

H16 provides a ligand contact to ATP. 3 residues coordinate substrate: K40, M72, and R86. Residues G87–R89, E97, and Y122–S128 contribute to the ATP site.

The protein belongs to the bacterial CoaD family. In terms of assembly, homohexamer. Mg(2+) is required as a cofactor.

The protein localises to the cytoplasm. It carries out the reaction (R)-4'-phosphopantetheine + ATP + H(+) = 3'-dephospho-CoA + diphosphate. It functions in the pathway cofactor biosynthesis; coenzyme A biosynthesis; CoA from (R)-pantothenate: step 4/5. In terms of biological role, reversibly transfers an adenylyl group from ATP to 4'-phosphopantetheine, yielding dephospho-CoA (dPCoA) and pyrophosphate. This chain is Phosphopantetheine adenylyltransferase, found in Dehalococcoides mccartyi (strain CBDB1).